Consider the following 1712-residue polypeptide: Latent-transforming growth factor beta-binding protein 1 (1712 aa).

An N-terminal signal peptide occupies residues 1 to 23; it reads MAGAWLRWGLLLWAGLLAWSAHG. The segment at 65-118 is disordered; that stretch reads TAASSRALAGPPAERTRRTSQPGGAALPGLRSPLPPEPARPGGPSRQLHSKAGA. In terms of domain architecture, EGF-like 1 spans 181–213; sequence TKPSCVPPCQNGGMCLRPQLCVCKPGSKGKACE. 3 disulfide bridges follow: Cys185/Cys195, Cys189/Cys201, and Cys203/Cys212. Asn339 and Asn370 each carry an N-linked (GlcNAc...) asparagine glycan. The 33-residue stretch at 391–423 folds into the EGF-like 2 domain; it reads RVVICHLPCMNGGQCSSRDKCQCPPNFTGKLCQ. 6 disulfide bridges follow: Cys395-Cys405, Cys399-Cys411, Cys413-Cys422, Cys551-Cys573, Cys560-Cys586, and Cys574-Cys589. Asn416 is a glycosylation site (N-linked (GlcNAc...) asparagine). The TB 1 domain occupies 549–601; it reads GRCFQETIGSQCGKALPGLSKQEDCCGTVGTSWGFNKCQKCPKKQSYHGYTQM. Asn612 carries N-linked (GlcNAc...) asparagine glycosylation. The 41-residue stretch at 618-658 folds into the EGF-like 3; calcium-binding domain; that stretch reads DINECQLQGVCPNGECLNTMGSYRCSCKMGFGPDPTFSSCV. 7 disulfides stabilise this stretch: Cys622/Cys633, Cys628/Cys642, Cys644/Cys657, Cys671/Cys694, Cys681/Cys706, Cys695/Cys709, and Cys696/Cys721. Ser639 is a glycosylation site (O-linked (Glc) serine). The TB 2 domain occupies 669-721; it reads GPCYRLVSPGRHCMHPLSVHLTKQICCCSVGKAWGPHCEKCPLPGTAAFKEIC. Positions 753 to 799 are disordered; sequence NTQPVAKSTHPPPLPAKEEPVEALTSSWEHGPRGAEPEVVTAPPEKE. Residues Thr761 and Thr793 are each glycosylated (O-linked (GalNAc...) threonine). Residues 865–906 form the EGF-like 4; calcium-binding domain; it reads EINECTVNPDICGAGHCINLPVRYTCICYEGYKFSEQLRKCV. 37 cysteine pairs are disulfide-bonded: Cys869–Cys881, Cys876–Cys890, Cys892–Cys905, Cys911–Cys923, Cys918–Cys932, Cys934–Cys947, Cys953–Cys964, Cys959–Cys973, Cys976–Cys988, Cys994–Cys1005, Cys1000–Cys1014, Cys1017–Cys1028, Cys1034–Cys1045, Cys1040–Cys1054, Cys1056–Cys1069, Cys1075–Cys1086, Cys1081–Cys1095, Cys1097–Cys1110, Cys1116–Cys1127, Cys1122–Cys1136, Cys1138–Cys1151, Cys1157–Cys1169, Cys1164–Cys1178, Cys1180–Cys1192, Cys1198–Cys1210, Cys1204–Cys1219, Cys1221–Cys1234, Cys1240–Cys1252, Cys1246–Cys1261, Cys1263–Cys1276, Cys1282–Cys1294, Cys1289–Cys1303, Cys1305–Cys1319, Cys1340–Cys1363, Cys1350–Cys1375, Cys1364–Cys1380, and Cys1365–Cys1392. The EGF-like 5; calcium-binding domain maps to 907–948; the sequence is DIDECAQVRHLCSQGRCENTEGSFLCVCPAGFMASEEGTNCI. Ser929 carries O-linked (Glc) serine glycosylation. Positions 949–989 constitute an EGF-like 6; calcium-binding domain; it reads DVDECLRPDMCRDGRCINTAGAFRCEYCDSGYRMSRRGYCE. At Asn966 the chain carries (3R)-3-hydroxyasparagine. In terms of domain architecture, EGF-like 7; calcium-binding spans 990-1029; it reads DIDECLKPSTCPEEQCVNTPGSYQCVPCTEGFRGWNGQCL. O-linked (Glc) serine glycosylation is present at Ser1011. Residues 1030–1070 form the EGF-like 8; calcium-binding domain; that stretch reads DVDECLQPKVCTNGSCTNLEGSYMCSCHRGYSPTPDHRHCQ. An N-linked (GlcNAc...) asparagine glycan is attached at Asn1042. Ser1051 carries O-linked (Glc) serine glycosylation. Positions 1071–1111 constitute an EGF-like 9; calcium-binding domain; sequence DIDECQQGNLCMNGQCRNTDGSFRCTCGQGYQLSAAKDQCE. The 41-residue stretch at 1112-1152 folds into the EGF-like 10; calcium-binding domain; sequence DIDECEHHHLCSHGQCRNTEGSFQCVCNQGYRASVLGDHCE. Asn1129 carries the post-translational modification (3R)-3-hydroxyasparagine. An O-linked (Glc) serine glycan is attached at Ser1133. The EGF-like 11; calcium-binding domain occupies 1153-1193; that stretch reads DINECLEDSSVCQGGDCINTAGSYDCTCPDGFQLNDNKGCQ. In terms of domain architecture, EGF-like 12; calcium-binding spans 1194-1235; that stretch reads DINECAQPGLCGSHGECLNTQGSFHCVCEQGFSISADGRTCE. Ser1216 carries O-linked (Glc) serine glycosylation. The region spanning 1236-1277 is the EGF-like 13; calcium-binding domain; sequence DIDECVNNTVCDSHGFCDNTAGSFRCLCYQGFQAPQDGQGCV. Asn1242 carries an N-linked (GlcNAc...) asparagine glycan. The region spanning 1278 to 1320 is the EGF-like 14; calcium-binding domain; that stretch reads DVNECELLSGVCGEAFCENVEGSFLCVCADENQEYSPMTGQCR. An 8-Cys3 region region spans residues 1335 to 1402; the sequence is EEKKECYYNL…PRGKGLVPAG (68 aa). The TB 3 domain occupies 1338-1392; the sequence is KECYYNLNDASLCDNVLAPNVTKQECCCTSGAGWGDNCEIFPCPVQGTAEFTEMC. Residue Asn1357 is glycosylated (N-linked (GlcNAc...) asparagine). At Ser1405 the chain carries Phosphoserine. The 43-residue stretch at 1415–1457 folds into the EGF-like 15; calcium-binding domain; sequence DADECLLFGEEICKNGYCLNTQPGYECYCKQGTYYDPVKLQCF. Disulfide bonds link Cys1419–Cys1432, Cys1427–Cys1441, Cys1443–Cys1456, Cys1462–Cys1473, Cys1468–Cys1482, Cys1484–Cys1497, Cys1517–Cys1541, Cys1527–Cys1553, Cys1542–Cys1556, and Cys1543–Cys1568. One can recognise an EGF-like 16; calcium-binding domain in the interval 1458–1498; that stretch reads DMDECQDPNSCIDGQCVNTEGSYNCFCTHPMVLDASEKRCV. O-linked (Glc) serine glycosylation is present at Ser1479. The tract at residues 1498–1712 is C-terminal domain; that stretch reads VQPTESNEQI…LNLDKESDLE (215 aa). In terms of domain architecture, TB 4 spans 1515–1568; the sequence is DLCWEHLSEEYVCSRPLVGKQTTYTECCCLYGEAWGMQCALCPMKDSDDYAQLC. Phosphoserine is present on residues Ser1588 and Ser1607. An EGF-like 17 domain is found at 1612–1652; the sequence is QAEECGILNGCENGRCVRVQEGYTCDCFDGYHLDMAKMTCV. 6 cysteine pairs are disulfide-bonded: Cys1616-Cys1627, Cys1622-Cys1636, Cys1638-Cys1651, Cys1657-Cys1672, Cys1667-Cys1681, and Cys1683-Cys1696. Positions 1653-1697 constitute an EGF-like 18; calcium-binding domain; the sequence is DVNECSELNNRMSLCKNAKCINTEGSYKCLCLPGYIPSDKPNYCT. Ser1678 carries O-linked (Glc) serine glycosylation.

This sequence belongs to the LTBP family. In terms of assembly, interacts with TGFB1; associates via disulfide bonds with the Latency-associated peptide chain (LAP) regulatory chain of TGFB1, leading to regulate activation of TGF-beta-1. LTBP1 does not bind directly to TGF-beta-1, the active chain of TGFB1. Interacts (via C-terminal domain) with FBN1 (via N-terminal domain). Interacts with FBN2. Interacts with ADAMTSL2. Interacts with EFEMP2. Post-translationally, contains hydroxylated asparagine residues. Two intrachain disulfide bonds from the TB3 domain are rearranged upon TGFB1 binding, and form interchain bonds with TGFB1 propeptide, anchoring it to the extracellular matrix. In terms of processing, O-glycosylated on serine residues by POGLUT2 and POGLUT3.

The protein resides in the secreted. It localises to the extracellular space. Its subcellular location is the extracellular matrix. In terms of biological role, key regulator of transforming growth factor beta (TGFB1, TGFB2 and TGFB3) that controls TGF-beta activation by maintaining it in a latent state during storage in extracellular space. Associates specifically via disulfide bonds with the Latency-associated peptide (LAP), which is the regulatory chain of TGF-beta, and regulates integrin-dependent activation of TGF-beta. Outcompeted by LRRC32/GARP for binding to LAP regulatory chain of TGF-beta. This is Latent-transforming growth factor beta-binding protein 1 from Mus musculus (Mouse).